The primary structure comprises 190 residues: Xanthine phosphoribosyltransferase (190 aa).

L20 and N27 together coordinate xanthine. 128–132 (ANGKA) is a 5-phospho-alpha-D-ribose 1-diphosphate binding site. Residue K156 participates in xanthine binding.

The protein belongs to the purine/pyrimidine phosphoribosyltransferase family. Xpt subfamily. In terms of assembly, homodimer.

It localises to the cytoplasm. The catalysed reaction is XMP + diphosphate = xanthine + 5-phospho-alpha-D-ribose 1-diphosphate. The protein operates within purine metabolism; XMP biosynthesis via salvage pathway; XMP from xanthine: step 1/1. Its function is as follows. Converts the preformed base xanthine, a product of nucleic acid breakdown, to xanthosine 5'-monophosphate (XMP), so it can be reused for RNA or DNA synthesis. This Pseudomonas entomophila (strain L48) protein is Xanthine phosphoribosyltransferase.